The primary structure comprises 588 residues: Aspartate--tRNA ligase (588 aa).

Glu172 provides a ligand contact to L-aspartate. Residues 196-199 (QLFK) are aspartate. Arg218 lines the L-aspartate pocket. Residues 218–220 (RDE) and Gln227 each bind ATP. L-aspartate is bound at residue His449. Glu483 contacts ATP. Arg490 is an L-aspartate binding site. 535–538 (GLDR) is an ATP binding site.

Belongs to the class-II aminoacyl-tRNA synthetase family. Type 1 subfamily. Homodimer.

The protein resides in the cytoplasm. The enzyme catalyses tRNA(Asp) + L-aspartate + ATP = L-aspartyl-tRNA(Asp) + AMP + diphosphate. Its function is as follows. Catalyzes the attachment of L-aspartate to tRNA(Asp) in a two-step reaction: L-aspartate is first activated by ATP to form Asp-AMP and then transferred to the acceptor end of tRNA(Asp). In Haemophilus influenzae (strain PittEE), this protein is Aspartate--tRNA ligase.